We begin with the raw amino-acid sequence, 220 residues long: Ribonuclease HII (220 aa).

Residues 1–210 (MKVAGVDEAG…ARKIEERFRK (210 aa)) form the RNase H type-2 domain. A divalent metal cation is bound by residues D7, E8, and D105.

Belongs to the RNase HII family. The cofactor is Mn(2+). Requires Mg(2+) as cofactor.

It localises to the cytoplasm. It catalyses the reaction Endonucleolytic cleavage to 5'-phosphomonoester.. Its function is as follows. Endonuclease that specifically degrades the RNA of RNA-DNA hybrids. The sequence is that of Ribonuclease HII (rnhB) from Pyrococcus horikoshii (strain ATCC 700860 / DSM 12428 / JCM 9974 / NBRC 100139 / OT-3).